Consider the following 427-residue polypeptide: Serine--tRNA ligase (427 aa).

236–238 contributes to the L-serine binding site; it reads TAE. 267–269 is an ATP binding site; the sequence is RRE. Glutamate 290 serves as a coordination point for L-serine. 354–357 provides a ligand contact to ATP; that stretch reads EISS. Serine 390 contacts L-serine.

It belongs to the class-II aminoacyl-tRNA synthetase family. Type-1 seryl-tRNA synthetase subfamily. In terms of assembly, homodimer. The tRNA molecule binds across the dimer.

It localises to the cytoplasm. The catalysed reaction is tRNA(Ser) + L-serine + ATP = L-seryl-tRNA(Ser) + AMP + diphosphate + H(+). It catalyses the reaction tRNA(Sec) + L-serine + ATP = L-seryl-tRNA(Sec) + AMP + diphosphate + H(+). It participates in aminoacyl-tRNA biosynthesis; selenocysteinyl-tRNA(Sec) biosynthesis; L-seryl-tRNA(Sec) from L-serine and tRNA(Sec): step 1/1. Its function is as follows. Catalyzes the attachment of serine to tRNA(Ser). Is also able to aminoacylate tRNA(Sec) with serine, to form the misacylated tRNA L-seryl-tRNA(Sec), which will be further converted into selenocysteinyl-tRNA(Sec). The chain is Serine--tRNA ligase from Picosynechococcus sp. (strain ATCC 27264 / PCC 7002 / PR-6) (Agmenellum quadruplicatum).